We begin with the raw amino-acid sequence, 191 residues long: Protein YceI (191 aa).

The signal sequence occupies residues 1–22 (MKKNLLGFTFASLLFTTGSAVA).

This sequence belongs to the UPF0312 family. Type 1 subfamily.

The protein resides in the periplasm. The sequence is that of Protein YceI from Salmonella agona (strain SL483).